Consider the following 299-residue polypeptide: Elongation factor Ts, mitochondrial (299 aa).

A mitochondrion-targeting transit peptide spans 1 to 18 (MLFQRRLHFHQFFGKTRV).

The protein belongs to the EF-Ts family.

The protein localises to the mitochondrion. Functionally, associates with the EF-Tu.GDP complex and induces the exchange of GDP to GTP. It remains bound to the aminoacyl-tRNA.EF-Tu.GTP complex up to the GTP hydrolysis stage on the ribosome. The protein is Elongation factor Ts, mitochondrial (tsf1) of Schizosaccharomyces pombe (strain 972 / ATCC 24843) (Fission yeast).